Consider the following 1220-residue polypeptide: Myosin-2 (1220 aa).

Residues 1-12 (MMLSASPNTLAK) show a composition bias toward polar residues. 2 disordered regions span residues 1-54 (MMLS…ARRS) and 68-95 (QNGS…RKEK). The span at 20–33 (ESLRQKDECDRPKD) shows a compositional bias: basic and acidic residues. Positions 40–54 (SRPNSRARLPSARRS) are enriched in low complexity. The span at 82-95 (ESERKEEGVKRKEK) shows a compositional bias: basic and acidic residues. The region spanning 160-209 (KKKLRVWCRVSNGQWQLGKIQSTSADTSLVMLSTANVVKVSTEELFPANP) is the Myosin N-terminal SH3-like domain. The Myosin motor domain maps to 213-879 (EGVEDLIQLS…QIGIFEDRRK (667 aa)). ATP-binding positions include 304–311 (GESGAGKT) and 353–361 (NANSSRFGK). Actin-binding regions lie at residues 638–672 (LIEK…KQHL) and 759–781 (LFKL…KPNS). IQ domains follow at residues 881 to 910 (VLQG…VTLV), 904 to 933 (MRKV…FHAD), and 942 to 971 (ELSA…QKEL). 2 disordered regions span residues 968-1007 (QKEL…MSDL) and 1075-1118 (SITG…NGNT). 2 stretches are compositionally biased toward polar residues: residues 997-1006 (PQVQPTSMSD) and 1098-1118 (TMST…NGNT). Residues 1003–1071 (SMSDLQKRIL…MSLAAARKSL (69 aa)) adopt a coiled-coil conformation.

This sequence belongs to the TRAFAC class myosin-kinesin ATPase superfamily. Myosin family. Plant myosin class VIII subfamily. As to quaternary structure, homodimer. As to expression, expressed in flowers, leaves and roots.

The protein resides in the cell junction. It localises to the plasmodesma. It is found in the endosome. Myosin heavy chain that is required for the cell cycle-regulated transport of various organelles and proteins for their segregation. Functions by binding with its tail domain to receptor proteins on organelles and exerting force with its N-terminal motor domain against actin filaments, thereby transporting its cargo along polarized actin cables. Involved in endocytosis via its action in endosomal trafficking. This Arabidopsis thaliana (Mouse-ear cress) protein is Myosin-2 (VIII-2).